The chain runs to 253 residues: MFSSYSLCKCLVSFHILAIQVLISCASSLNLTNEYLNHKCRKYQPGSEYEKELNTLSRRVATLDFTDGFTHRSNSRDTKSVTIIFQCRGDSYRSKCNSCYATALAGFRSRCPRNKGGIIWYDQCFLDVSMINDNSPRRMNYDNIFSMHNPNNVRGNVNSFNKKTTEFLYKLIGKADRLDVDGINFLYYAAGEMRLGKQTLFAMVQCAKDILSCKDCLEWSIKELSKCCDGKQGARVVGTICNLRYELYPFLRT.

An N-terminal signal peptide occupies residues 1 to 28 (MFSSYSLCKCLVSFHILAIQVLISCASS). Gnk2-homologous domains lie at 34 to 133 (EYLN…MIND) and 141 to 250 (YDNI…LYPF).

Belongs to the cysteine-rich repeat secretory protein family.

It is found in the secreted. The sequence is that of Putative cysteine-rich repeat secretory protein 33 (CRRSP33) from Arabidopsis thaliana (Mouse-ear cress).